The chain runs to 263 residues: MFGFFKSPGNNKLPNESSNNKGGTITAGRRTSSEPILITPDFDDDDKYKNGFNDSGGLQSQTTEELEKYAVYKAEETTKGVNNCLKIAEDIRSDGARTLEMLHQQGEQINRTHEMAVDMDKDLSRGEKLLNNLGGMFSKPWKPKKTKNITGPMITPDKPSKKSENHKEEREKLGLGAKGRSSSQPALDQPTNALQKVEQEKAKQDDGLSDLSDILGDLKSMAVDMGSEIDKQNKALDHLGDDVDELNSRVQGANQRARHLLSK.

Disordered regions lie at residues 1 to 61 (MFGF…LQSQ) and 132 to 209 (NLGG…DGLS). Polar residues-rich tracts occupy residues 8-34 (PGNN…TSSE) and 52-61 (FNDSGGLQSQ). Residues 158–173 (KPSKKSENHKEEREKL) are compositionally biased toward basic and acidic residues. Residues 180 to 194 (RSSSQPALDQPTNAL) show a composition bias toward polar residues. Basic and acidic residues predominate over residues 197-206 (VEQEKAKQDD). The t-SNARE coiled-coil homology domain maps to 198–260 (EQEKAKQDDG…QGANQRARHL (63 aa)).

Belongs to the SNAP-25 family.

It localises to the membrane. The protein resides in the cytoplasm. In terms of biological role, vesicle trafficking protein that functions in the secretory pathway. In Arabidopsis thaliana (Mouse-ear cress), this protein is Putative SNAP25 homologous protein SNAP30 (SNAP30).